The primary structure comprises 103 residues: Putative inactive recombination-promoting nuclease-like protein YjiP (103 aa).

It belongs to the Rpn/YhgA-like nuclease family.

In terms of biological role, this pseudogene is the N-terminal fragment of low activity DNA endonuclease RpnD which probably yields 3'-hydroxyl ends. The intact protein can be seen in this entry (AC B7NGZ6). Expression of the repaired protein increases the frequency of recA-independent recombination, but also decreases viability probably via DNA damage; in a RecA strain expression has no effect on viability but does induce the SOS repair response. May play a role in horizontal gene transfer. The protein is Putative inactive recombination-promoting nuclease-like protein YjiP (yjiP) of Escherichia coli (strain K12).